We begin with the raw amino-acid sequence, 134 residues long: UPF0102 protein Dshi_2830 (134 aa).

It belongs to the UPF0102 family.

This Dinoroseobacter shibae (strain DSM 16493 / NCIMB 14021 / DFL 12) protein is UPF0102 protein Dshi_2830.